Here is a 299-residue protein sequence, read N- to C-terminus: Ethylmalonyl-CoA decarboxylase (299 aa).

K209 carries the post-translational modification N6-acetyllysine; alternate. K209 bears the N6-succinyllysine; alternate mark. N6-succinyllysine is present on K293.

The protein belongs to the enoyl-CoA hydratase/isomerase family.

The protein resides in the cytoplasm. It localises to the cytosol. The catalysed reaction is (2S)-ethylmalonyl-CoA + H(+) = butanoyl-CoA + CO2. The enzyme catalyses (S)-methylmalonyl-CoA + H(+) = propanoyl-CoA + CO2. It carries out the reaction (2R)-ethylmalonyl-CoA + H(+) = butanoyl-CoA + CO2. Decarboxylates ethylmalonyl-CoA, a potentially toxic metabolite, to form butyryl-CoA, suggesting it might be involved in metabolite proofreading. Acts preferentially on (S)-ethylmalonyl-CoA but also has some activity on the (R)-isomer. Also has methylmalonyl-CoA decarboxylase activity at lower level. This chain is Ethylmalonyl-CoA decarboxylase (Echdc1), found in Rattus norvegicus (Rat).